The sequence spans 300 residues: tRNA pseudouridine synthase B (300 aa).

The active-site Nucleophile is D38.

This sequence belongs to the pseudouridine synthase TruB family. Type 1 subfamily.

The enzyme catalyses uridine(55) in tRNA = pseudouridine(55) in tRNA. In terms of biological role, responsible for synthesis of pseudouridine from uracil-55 in the psi GC loop of transfer RNAs. The chain is tRNA pseudouridine synthase B from Dehalococcoides mccartyi (strain ATCC BAA-2100 / JCM 16839 / KCTC 5957 / BAV1).